Consider the following 214-residue polypeptide: Probable GTP-binding protein EngB (214 aa).

Residues 25–203 (EGAEVAFAGR…EQVITGWLNL (179 aa)) enclose the EngB-type G domain. GTP contacts are provided by residues 33 to 40 (GRSNAGKS), 60 to 64 (GRTQL), 80 to 83 (DLPG), 147 to 150 (TKSD), and 182 to 184 (FSS). The Mg(2+) site is built by S40 and T62.

The protein belongs to the TRAFAC class TrmE-Era-EngA-EngB-Septin-like GTPase superfamily. EngB GTPase family. Requires Mg(2+) as cofactor.

In terms of biological role, necessary for normal cell division and for the maintenance of normal septation. In Teredinibacter turnerae (strain ATCC 39867 / T7901), this protein is Probable GTP-binding protein EngB.